A 283-amino-acid chain; its full sequence is Acetylglutamate kinase (283 aa).

Substrate-binding positions include 63 to 64, Arg-85, and Asn-178; that span reads GG.

It belongs to the acetylglutamate kinase family. ArgB subfamily.

It is found in the cytoplasm. It catalyses the reaction N-acetyl-L-glutamate + ATP = N-acetyl-L-glutamyl 5-phosphate + ADP. It participates in amino-acid biosynthesis; L-arginine biosynthesis; N(2)-acetyl-L-ornithine from L-glutamate: step 2/4. Catalyzes the ATP-dependent phosphorylation of N-acetyl-L-glutamate. The chain is Acetylglutamate kinase from Prochlorococcus marinus (strain MIT 9515).